A 488-amino-acid polypeptide reads, in one-letter code: Germacrene A hydroxylase (488 aa).

Over 1–6 the chain is Cytoplasmic; the sequence is MELSFT. A helical; Signal-anchor for type II membrane protein transmembrane segment spans residues 7–23; that stretch reads TSIAVATIVFVLFKLAT. The Lumenal portion of the chain corresponds to 24–488; the sequence is RPKSNKKLLP…KTHLVLVPSF (465 aa). Residues asparagine 255, asparagine 260, and asparagine 379 are each glycosylated (N-linked (GlcNAc...) asparagine). Cysteine 432 is a binding site for heme.

It belongs to the cytochrome P450 family. It depends on heme as a cofactor.

The protein resides in the endoplasmic reticulum membrane. The enzyme catalyses (+)-(R)-germacrene A + 3 reduced [NADPH--hemoprotein reductase] + 3 O2 = germacra-1(10),4,11(13)-trien-12-oate + 3 oxidized [NADPH--hemoprotein reductase] + 4 H2O + 4 H(+). It functions in the pathway secondary metabolite biosynthesis; terpenoid biosynthesis. Its function is as follows. Involved in the biosynthesis of germacrene-derived sesquiterpene lactones. Catalyzes three consecutive oxidations of germacrene A to produce germacrene A acid. Could also catalyze the three-step oxidation of non-natural substrate amorphadiene to artemisinic acid. This chain is Germacrene A hydroxylase, found in Saussurea costus (Costus).